The sequence spans 367 residues: MASSPVGVPSPQPSRANGNINLGPSANPNARPTDFDFLKVIGKGNYGKVLLAKRKSDGAFYAVKVLQKKSILKNKEQNHIMAERNVLLKNVRHPFLVGLRYSFQTPEKLYFVLDYVNGGELFFHLQRERRFLEPRARFYTAEVASAIGYLHSLNIIYRDLKPENILLDCQGHVVLTDFGLCKECVEPEETTSTFCGTPEYLAPEVLRKEPYDRAVDWWCLGAVLYEMLHGLPPFFNTDVAQMYENILHQPLQIPGGRTVAACDLLQGLLHKDQRQRLGSKEDFLDIKNHMFFSPINWDDLYHKRLTPPFNPNVEGPADLKHFDPEFTQEAVSKSIGCTPDTVASSSGASSAFLGFSYAQDDDDILDS.

Residues 1–28 (MASSPVGVPSPQPSRANGNINLGPSANP) form a disordered region. Serine 10 is modified (phosphoserine). The span at 15-28 (RANGNINLGPSANP) shows a compositional bias: polar residues. Positions 35-292 (FDFLKVIGKG…FLDIKNHMFF (258 aa)) constitute a Protein kinase domain. Residues 41–49 (IGKGNYGKV) and lysine 64 contribute to the ATP site. The Nuclear localization signal signature appears at 68 to 78 (KKSILKNKEQN). Aspartate 159 serves as the catalytic Proton acceptor. A Phosphothreonine; by PDPK1 modification is found at threonine 193. Residues 293 to 367 (SPINWDDLYH…AQDDDDILDS (75 aa)) enclose the AGC-kinase C-terminal domain. 2 positions are modified to phosphoserine: serine 334 and serine 356. Tyrosine 357 is subject to Phosphotyrosine.

It belongs to the protein kinase superfamily. AGC Ser/Thr protein kinase family. Activated by phosphorylation on Ser-356 by an unknown kinase (may be mTORC2 but not confirmed), transforming it into a substrate for PDPK1 which then phosphorylates it on Thr-193.

It is found in the cytoplasm. It localises to the nucleus. It catalyses the reaction L-seryl-[protein] + ATP = O-phospho-L-seryl-[protein] + ADP + H(+). It carries out the reaction L-threonyl-[protein] + ATP = O-phospho-L-threonyl-[protein] + ADP + H(+). Two specific sites, one in the kinase domain (Thr-193) and the other in the C-terminal regulatory region (Ser-356), need to be phosphorylated for its full activation. Functionally, serine/threonine-protein kinase which is involved in the regulation of a wide variety of ion channels, membrane transporters, cell growth, survival and proliferation. Up-regulates Na(+) channels: SCNN1A/ENAC, K(+) channels: KCNA3/Kv1.3, KCNE1 and KCNQ1, amino acid transporter: SLC6A19, glutamate transporter: SLC1A6/EAAT4, glutamate receptors: GRIA1/GLUR1 and GRIK2/GLUR6, Na(+)/H(+) exchanger: SLC9A3/NHE3, and the Na(+)/K(+) ATPase. This chain is Serine/threonine-protein kinase Sgk2 (Sgk2), found in Mus musculus (Mouse).